Reading from the N-terminus, the 189-residue chain is uncharacterized protein (189 aa).

The next 4 helical transmembrane spans lie at 20–40, 46–66, 100–120, and 126–146; these read FILG…YLTF, TIII…IILI, VLLF…SLNI, and FVLY…GDVI.

To M.jannaschii MJ0795.1 and MJ1249.1.

It is found in the cell membrane. This is an uncharacterized protein from Methanocaldococcus jannaschii (strain ATCC 43067 / DSM 2661 / JAL-1 / JCM 10045 / NBRC 100440) (Methanococcus jannaschii).